The chain runs to 1392 residues: ATP-dependent helicase/nuclease subunit A (1392 aa).

Positions 3-489 (NPKWTPAQQA…IDLNQNFRSR (487 aa)) constitute a UvrD-like helicase ATP-binding domain. 24–31 (AAAGSGKT) contacts ATP. Disordered stretches follow at residues 291 to 319 (RGSKKNLPDSLIDEENSKRLREESKKARD), 556 to 594 (RGAEDAATGADSPAKGEGEEFEQNREPESGDDESSLEEA), and 1051 to 1126 (GPVQ…LDTK). Composition is skewed to basic and acidic residues over residues 305 to 319 (ENSKRLREESKKARD) and 569 to 583 (AKGEGEEFEQNREPE). The region spanning 556 to 886 (RGAEDAATGA…RFITVHSSKG (331 aa)) is the UvrD-like helicase C-terminal domain. Positions 584–594 (SGDDESSLEEA) are enriched in acidic residues. Over residues 1088–1113 (ASGKTEIPGETKNSEETKTSEDKKNL) the composition is skewed to basic and acidic residues.

The protein belongs to the helicase family. AddA subfamily. Heterodimer of AddA and AddB/RexB. It depends on Mg(2+) as a cofactor.

The enzyme catalyses Couples ATP hydrolysis with the unwinding of duplex DNA by translocating in the 3'-5' direction.. The catalysed reaction is ATP + H2O = ADP + phosphate + H(+). The heterodimer acts as both an ATP-dependent DNA helicase and an ATP-dependent, dual-direction single-stranded exonuclease. Recognizes the chi site generating a DNA molecule suitable for the initiation of homologous recombination. The AddA nuclease domain is required for chi fragment generation; this subunit has the helicase and 3' -&gt; 5' nuclease activities. The polypeptide is ATP-dependent helicase/nuclease subunit A (Desulfitobacterium hafniense (strain Y51)).